The following is a 193-amino-acid chain: UPF0215 protein PH0071 (193 aa).

It belongs to the UPF0215 family.

This chain is UPF0215 protein PH0071, found in Pyrococcus horikoshii (strain ATCC 700860 / DSM 12428 / JCM 9974 / NBRC 100139 / OT-3).